The following is a 178-amino-acid chain: MSRIGKKPITIPAGIEVTVNGTLISVKKGNNVSTVETHGRVGIEVANGQVILTRNGDTKESSAFWGTYRALTANAINGLHEGFTKSLEINGVGYRATLKGDILELALGYSHPINYEIPKGLEITVEKNIVSVKGADKQQVGQAAAIIRGFRKPEPYKGKGVKYTDEKIIRKAGKTSKK.

It belongs to the universal ribosomal protein uL6 family. As to quaternary structure, part of the 50S ribosomal subunit.

Its function is as follows. This protein binds to the 23S rRNA, and is important in its secondary structure. It is located near the subunit interface in the base of the L7/L12 stalk, and near the tRNA binding site of the peptidyltransferase center. In Aliarcobacter butzleri (strain RM4018) (Arcobacter butzleri), this protein is Large ribosomal subunit protein uL6.